Here is a 166-residue protein sequence, read N- to C-terminus: MSEAIIAKKAEQVELIAEKMKAAASIVVVDSRGLTVDQDTVLRRSLRESGVEFKVIKNSILTRAAEKAGLDELKDVFVGPSAVAFSNEDVIAPAKVINDFTKTADALEIKGGAIEGAVSSKEEIQALATLPNREGMLSMLLSVLQAPVRNVAYAVKAVAENKEGAA.

The protein belongs to the universal ribosomal protein uL10 family. Part of the ribosomal stalk of the 50S ribosomal subunit. The N-terminus interacts with L11 and the large rRNA to form the base of the stalk. The C-terminus forms an elongated spine to which L12 dimers bind in a sequential fashion forming a multimeric L10(L12)X complex.

Functionally, forms part of the ribosomal stalk, playing a central role in the interaction of the ribosome with GTP-bound translation factors. The polypeptide is Large ribosomal subunit protein uL10 (Streptococcus pyogenes serotype M28 (strain MGAS6180)).